The chain runs to 218 residues: Pyridoxine/pyridoxamine 5'-phosphate oxidase (218 aa).

Substrate is bound by residues R11–Y14 and K75. FMN is bound by residues R70–K75, Y85–T86, K92, and Q114. Residues Y132, R136, and S140 each contribute to the substrate site. FMN-binding positions include Q149–S150 and W195. R201–H203 provides a ligand contact to substrate. R205 contacts FMN.

It belongs to the pyridoxamine 5'-phosphate oxidase family. In terms of assembly, homodimer. FMN serves as cofactor.

The catalysed reaction is pyridoxamine 5'-phosphate + O2 + H2O = pyridoxal 5'-phosphate + H2O2 + NH4(+). It catalyses the reaction pyridoxine 5'-phosphate + O2 = pyridoxal 5'-phosphate + H2O2. The protein operates within cofactor metabolism; pyridoxal 5'-phosphate salvage; pyridoxal 5'-phosphate from pyridoxamine 5'-phosphate: step 1/1. Its pathway is cofactor metabolism; pyridoxal 5'-phosphate salvage; pyridoxal 5'-phosphate from pyridoxine 5'-phosphate: step 1/1. In terms of biological role, catalyzes the oxidation of either pyridoxine 5'-phosphate (PNP) or pyridoxamine 5'-phosphate (PMP) into pyridoxal 5'-phosphate (PLP). The sequence is that of Pyridoxine/pyridoxamine 5'-phosphate oxidase from Mycolicibacterium gilvum (strain PYR-GCK) (Mycobacterium gilvum (strain PYR-GCK)).